A 226-amino-acid polypeptide reads, in one-letter code: RPA-interacting protein A (226 aa).

The tract at residues 1-45 (MEAERRHRALYKGTTPPWKETYRKRCVERLKRNRSKLLDKFRQVG) is interaction with importin beta. An interaction with RPA1 region spans residues 49–171 (HGGVGGSFLV…QCGVYINTQS (123 aa)). Residues 144–219 (CPVCNRNYLT…ASLFMSCQEC (76 aa)) form an RIP-type zinc finger.

Interacts directly with the rpa1 subunit of RPA complex. Interacts with importin beta, but not with importin alpha. Forms a complex with the RPA complex and importin beta, which is dissociated by Ran-GTP.

The protein localises to the nucleus. Functionally, mediates the import of RPA complex into the nucleus, via its interaction with importin beta. In Xenopus laevis (African clawed frog), this protein is RPA-interacting protein A (rpain-a).